Here is a 36-residue protein sequence, read N- to C-terminus: Pancreatic polypeptide (36 aa).

Position 36 is a tyrosine amide (Tyr36).

It belongs to the NPY family.

The protein resides in the secreted. Its function is as follows. Hormone secreted by pancreatic cells that acts as a regulator of pancreatic and gastrointestinal functions probably by signaling through the G protein-coupled receptor NPY4R2. The polypeptide is Pancreatic polypeptide (PPY) (Chinchilla chinchilla (Short-tailed chinchilla)).